The chain runs to 92 residues: Small ribosomal subunit protein uS19 (92 aa).

The protein belongs to the universal ribosomal protein uS19 family.

In terms of biological role, protein S19 forms a complex with S13 that binds strongly to the 16S ribosomal RNA. The chain is Small ribosomal subunit protein uS19 from Variovorax paradoxus (strain S110).